Reading from the N-terminus, the 325-residue chain is Heat-inducible transcription repressor HrcA (325 aa).

The protein belongs to the HrcA family.

Its function is as follows. Negative regulator of class I heat shock genes (grpE-dnaK-dnaJ and groELS operons). Prevents heat-shock induction of these operons. The protein is Heat-inducible transcription repressor HrcA of Staphylococcus epidermidis (strain ATCC 35984 / DSM 28319 / BCRC 17069 / CCUG 31568 / BM 3577 / RP62A).